The sequence spans 2579 residues: Ectopic P granules protein 5 homolog (2579 aa).

2 disordered regions span residues 1–46 (MAEA…SREQ) and 92–132 (NEES…GTKV). Basic residues predominate over residues 7–23 (PQRRAKAKASRTKTKEK). Positions 24–34 (KKYETPQREES) are enriched in basic and acidic residues. T134 carries the phosphothreonine modification. Positions 535–564 (PSERKPSSSGPGSGTWTLVDEGGEEDEDPE) are disordered. Over residues 555 to 564 (EGGEEDEDPE) the composition is skewed to acidic residues. Residues 1607-1633 (MHKNEAISQQLHVLRKEVKQLQAEAAK) are a coiled coil.

The protein belongs to the EPG5 family. As to quaternary structure, interacts with RAN.

Its subcellular location is the cytoplasm. It localises to the perinuclear region. It is found in the lysosome. Involved in autophagy. May play a role in a late step of autophagy, such as clearance of autophagosomal cargo. Plays a key role in innate and adaptive immune response triggered by unmethylated cytidine-phosphate-guanosine (CpG) dinucleotides from pathogens, and mediated by the nucleotide-sensing receptor TLR9. It is necessary for the translocation of CpG dinucleotides from early endosomes to late endosomes and lysosomes, where TLR9 is located. The polypeptide is Ectopic P granules protein 5 homolog (EPG5) (Homo sapiens (Human)).